Reading from the N-terminus, the 172-residue chain is Large ribosomal subunit protein uL10 (172 aa).

The protein belongs to the universal ribosomal protein uL10 family. As to quaternary structure, part of the ribosomal stalk of the 50S ribosomal subunit. The N-terminus interacts with L11 and the large rRNA to form the base of the stalk. The C-terminus forms an elongated spine to which L12 dimers bind in a sequential fashion forming a multimeric L10(L12)X complex.

In terms of biological role, forms part of the ribosomal stalk, playing a central role in the interaction of the ribosome with GTP-bound translation factors. The chain is Large ribosomal subunit protein uL10 from Chlorobium phaeobacteroides (strain DSM 266 / SMG 266 / 2430).